Consider the following 551-residue polypeptide: HTH-type transcriptional regulator SgrR (551 aa).

Residues 1 to 116 form the HTH marR-type domain; that stretch reads MPSARLQQQF…LVSHLGRSFR (116 aa). The H-T-H motif DNA-binding region spans 26-49; the sequence is LNELAALLSCSRRHMRTLLNTMQD. The segment at 163–492 is solute-binding; it reads ELEADIAHHW…IDWQADAARW (330 aa).

In terms of biological role, activates the small RNA gene sgrS under glucose-phosphate stress conditions as well as yfdZ. Represses its own transcription under both stress and non-stress conditions. Might act as a sensor of the intracellular accumulation of phosphoglucose by binding these molecules in its C-terminal solute-binding domain. This is HTH-type transcriptional regulator SgrR from Escherichia coli O6:K15:H31 (strain 536 / UPEC).